The following is a 216-amino-acid chain: Probable transaldolase (216 aa).

Residue K84 is the Schiff-base intermediate with substrate of the active site.

This sequence belongs to the transaldolase family. Type 3B subfamily.

The protein localises to the cytoplasm. It catalyses the reaction D-sedoheptulose 7-phosphate + D-glyceraldehyde 3-phosphate = D-erythrose 4-phosphate + beta-D-fructose 6-phosphate. It participates in carbohydrate degradation; pentose phosphate pathway; D-glyceraldehyde 3-phosphate and beta-D-fructose 6-phosphate from D-ribose 5-phosphate and D-xylulose 5-phosphate (non-oxidative stage): step 2/3. Transaldolase is important for the balance of metabolites in the pentose-phosphate pathway. In Exiguobacterium sp. (strain ATCC BAA-1283 / AT1b), this protein is Probable transaldolase.